Here is a 227-residue protein sequence, read N- to C-terminus: MSTPTGQPAYVLHSRAYRENSALVDFLTPQGRLRAVLRSAKGKAGSLARPFVPLEVEFRGRGELKNVGRMESAGVATWMTGEALFSGMYLNELLIRLLPAEDPHPAVFEHYAATLLALALGRPLEPLLRSFEWRLLDDLGYGFAMDADINGEPLAIDGMYRLQVDAGLERVYLLQPGLFQGAELLAMSEADWSVPGALSAAKRLMRQALAVHLGGRPLVSRELFRKP.

Belongs to the RecO family.

Functionally, involved in DNA repair and RecF pathway recombination. The protein is DNA repair protein RecO of Pseudomonas syringae pv. syringae (strain B728a).